An 81-amino-acid polypeptide reads, in one-letter code: Photosystem I iron-sulfur center (81 aa).

2 4Fe-4S ferredoxin-type domains span residues 2–31 (SHSVKIYDTCIGCTQCVRACPTDVLEMIPW) and 39–68 (IASAPRTEDCVGCKRCESACPTDFLSVRVY). [4Fe-4S] cluster-binding residues include Cys-11, Cys-14, Cys-17, Cys-21, Cys-48, Cys-51, Cys-54, and Cys-58.

In terms of assembly, the eukaryotic PSI reaction center is composed of at least 11 subunits. [4Fe-4S] cluster is required as a cofactor.

Its subcellular location is the plastid. The protein localises to the chloroplast thylakoid membrane. The catalysed reaction is reduced [plastocyanin] + hnu + oxidized [2Fe-2S]-[ferredoxin] = oxidized [plastocyanin] + reduced [2Fe-2S]-[ferredoxin]. Functionally, apoprotein for the two 4Fe-4S centers FA and FB of photosystem I (PSI); essential for photochemical activity. FB is the terminal electron acceptor of PSI, donating electrons to ferredoxin. The C-terminus interacts with PsaA/B/D and helps assemble the protein into the PSI complex. Required for binding of PsaD and PsaE to PSI. PSI is a plastocyanin-ferredoxin oxidoreductase, converting photonic excitation into a charge separation, which transfers an electron from the donor P700 chlorophyll pair to the spectroscopically characterized acceptors A0, A1, FX, FA and FB in turn. This is Photosystem I iron-sulfur center from Spinacia oleracea (Spinach).